We begin with the raw amino-acid sequence, 403 residues long: Indoleamine 2,3-dioxygenase 1 (403 aa).

Heme b is bound at residue histidine 346. The interval 360 to 381 (QQPKENKTSEDPSKLEAKGTGG) is disordered. The segment covering 363–376 (KENKTSEDPSKLEA) has biased composition (basic and acidic residues).

It belongs to the indoleamine 2,3-dioxygenase family. Monomer. The cofactor is heme b. Expressed in mature dendritic cells located in lymphoid organs (including lymph nodes, spleen, tonsils, Peyers's patches, the gut lamina propria, and the thymic medulla), in some epithelial cells of the female genital tract, as well as in endothelial cells of term placenta and in lung parenchyma. Weakly or not expressed in most normal tissues, but mostly inducible in most tissues. Expressed in more than 50% of tumors, either by tumoral, stromal, or endothelial cells (expression in tumor is associated with a worse clinical outcome). Not overexpressed in tumor-draining lymph nodes.

It is found in the cytoplasm. It localises to the cytosol. It carries out the reaction D-tryptophan + O2 = N-formyl-D-kynurenine. The catalysed reaction is L-tryptophan + O2 = N-formyl-L-kynurenine. It functions in the pathway amino-acid degradation; L-tryptophan degradation via kynurenine pathway; L-kynurenine from L-tryptophan: step 1/2. Its activity is regulated as follows. Activity is inhibited by and MTH-trp (methylthiohydantoin-DL-tryptophan), modestly inhibited by L-1MT (1-methyl-L-tryptophan) but not D-1MT (1-methyl-D-tryptophan). Its function is as follows. Catalyzes the first and rate limiting step of the catabolism of the essential amino acid tryptophan along the kynurenine pathway. Involved in the peripheral immune tolerance, contributing to maintain homeostasis by preventing autoimmunity or immunopathology that would result from uncontrolled and overreacting immune responses. Tryptophan shortage inhibits T lymphocytes division and accumulation of tryptophan catabolites induces T-cell apoptosis and differentiation of regulatory T-cells. Acts as a suppressor of anti-tumor immunity. Limits the growth of intracellular pathogens by depriving tryptophan. Protects the fetus from maternal immune rejection. In Homo sapiens (Human), this protein is Indoleamine 2,3-dioxygenase 1.